The sequence spans 236 residues: UPF0502 protein BceJ2315_62050 (236 aa).

The protein belongs to the UPF0502 family.

The polypeptide is UPF0502 protein BceJ2315_62050 (Burkholderia cenocepacia (strain ATCC BAA-245 / DSM 16553 / LMG 16656 / NCTC 13227 / J2315 / CF5610) (Burkholderia cepacia (strain J2315))).